The primary structure comprises 286 residues: Beta-lactamase Ohio-1 (286 aa).

The first 21 residues, 1-21 (MRYFRLCIISLLATLPLRVHA), serve as a signal peptide directing secretion. Ser-66 serves as the catalytic Acyl-ester intermediate. A disulfide bridge connects residues Cys-73 and Cys-119. Glu-164 acts as the Proton acceptor in catalysis. 230–232 (KTG) is a substrate binding site.

It belongs to the class-A beta-lactamase family.

The catalysed reaction is a beta-lactam + H2O = a substituted beta-amino acid. In Enterobacter cloacae, this protein is Beta-lactamase Ohio-1.